We begin with the raw amino-acid sequence, 303 residues long: N-acetyl-D-glucosamine kinase (303 aa).

ATP is bound by residues 4–11 and 133–140; these read GFDVGGTK and GFGGGLIF. Zn(2+)-binding residues include histidine 157, cysteine 177, cysteine 179, and cysteine 184.

The protein belongs to the ROK (NagC/XylR) family. NagK subfamily.

The catalysed reaction is N-acetyl-D-glucosamine + ATP = N-acetyl-D-glucosamine 6-phosphate + ADP + H(+). It participates in cell wall biogenesis; peptidoglycan recycling. Catalyzes the phosphorylation of N-acetyl-D-glucosamine (GlcNAc) derived from cell-wall degradation, yielding GlcNAc-6-P. This is N-acetyl-D-glucosamine kinase from Aliivibrio fischeri (strain ATCC 700601 / ES114) (Vibrio fischeri).